A 375-amino-acid polypeptide reads, in one-letter code: Queuine tRNA-ribosyltransferase (375 aa).

Asp90 acts as the Proton acceptor in catalysis. Residues 90–94 (DSGGF), Asp144, Gln190, and Gly217 each bind substrate. Positions 248 to 254 (GIGTPHY) are RNA binding. Asp267 functions as the Nucleophile in the catalytic mechanism. Residues 272–276 (ARITR) are RNA binding; important for wobble base 34 recognition. The Zn(2+) site is built by Cys305, Cys307, Cys310, and His336.

This sequence belongs to the queuine tRNA-ribosyltransferase family. As to quaternary structure, homodimer. Within each dimer, one monomer is responsible for RNA recognition and catalysis, while the other monomer binds to the replacement base PreQ1. Requires Zn(2+) as cofactor.

The enzyme catalyses 7-aminomethyl-7-carbaguanine + guanosine(34) in tRNA = 7-aminomethyl-7-carbaguanosine(34) in tRNA + guanine. Its pathway is tRNA modification; tRNA-queuosine biosynthesis. Its function is as follows. Catalyzes the base-exchange of a guanine (G) residue with the queuine precursor 7-aminomethyl-7-deazaguanine (PreQ1) at position 34 (anticodon wobble position) in tRNAs with GU(N) anticodons (tRNA-Asp, -Asn, -His and -Tyr). Catalysis occurs through a double-displacement mechanism. The nucleophile active site attacks the C1' of nucleotide 34 to detach the guanine base from the RNA, forming a covalent enzyme-RNA intermediate. The proton acceptor active site deprotonates the incoming PreQ1, allowing a nucleophilic attack on the C1' of the ribose to form the product. After dissociation, two additional enzymatic reactions on the tRNA convert PreQ1 to queuine (Q), resulting in the hypermodified nucleoside queuosine (7-(((4,5-cis-dihydroxy-2-cyclopenten-1-yl)amino)methyl)-7-deazaguanosine). This Borreliella burgdorferi (strain ATCC 35210 / DSM 4680 / CIP 102532 / B31) (Borrelia burgdorferi) protein is Queuine tRNA-ribosyltransferase.